A 2287-amino-acid polypeptide reads, in one-letter code: Protein Ycf2 (2287 aa).

Gly-1632–Ser-1639 is an ATP binding site.

The protein belongs to the Ycf2 family.

The protein localises to the plastid. It localises to the chloroplast stroma. Its function is as follows. Probable ATPase of unknown function. Its presence in a non-photosynthetic plant (Epifagus virginiana) and experiments in tobacco indicate that it has an essential function which is probably not related to photosynthesis. This chain is Protein Ycf2, found in Calycanthus floridus var. glaucus (Eastern sweetshrub).